A 934-amino-acid polypeptide reads, in one-letter code: 2-oxoglutarate dehydrogenase E1 component (934 aa).

The span at 515–537 (RAAQDKIDKSDKMDNPDMERPES) shows a compositional bias: basic and acidic residues. The segment at 515–544 (RAAQDKIDKSDKMDNPDMERPESLQEPLQS) is disordered.

The protein belongs to the alpha-ketoglutarate dehydrogenase family. Homodimer. Part of the 2-oxoglutarate dehydrogenase (OGDH) complex composed of E1 (2-oxoglutarate dehydrogenase), E2 (dihydrolipoamide succinyltransferase) and E3 (dihydrolipoamide dehydrogenase); the complex contains multiple copies of the three enzymatic components (E1, E2 and E3). It depends on thiamine diphosphate as a cofactor.

It carries out the reaction N(6)-[(R)-lipoyl]-L-lysyl-[protein] + 2-oxoglutarate + H(+) = N(6)-[(R)-S(8)-succinyldihydrolipoyl]-L-lysyl-[protein] + CO2. Functionally, E1 component of the 2-oxoglutarate dehydrogenase (OGDH) complex which catalyzes the decarboxylation of 2-oxoglutarate, the first step in the conversion of 2-oxoglutarate to succinyl-CoA and CO(2). This Staphylococcus haemolyticus (strain JCSC1435) protein is 2-oxoglutarate dehydrogenase E1 component.